The chain runs to 327 residues: GTPase Obg (327 aa).

Residues 1-159 enclose the Obg domain; it reads MQFIDQANII…WEVQLELKLL (159 aa). In terms of domain architecture, OBG-type G spans 160-327; it reads AEVGIIGLPN…SLLFEVWKRI (168 aa). Residues 166–173, 191–195, 213–216, 280–283, and 309–311 each bind ATP; these read GLPNAGKS, FTTLI, DIPG, NKME, and SSS. The Mg(2+) site is built by S173 and T193.

It belongs to the TRAFAC class OBG-HflX-like GTPase superfamily. OBG GTPase family. Monomer. It depends on Mg(2+) as a cofactor.

The protein localises to the cytoplasm. Its function is as follows. An essential GTPase which binds GTP, GDP and possibly (p)ppGpp with moderate affinity, with high nucleotide exchange rates and a fairly low GTP hydrolysis rate. Plays a role in control of the cell cycle, stress response, ribosome biogenesis and in those bacteria that undergo differentiation, in morphogenesis control. The polypeptide is GTPase Obg (Prochlorococcus marinus (strain MIT 9312)).